A 149-amino-acid polypeptide reads, in one-letter code: Thioredoxin-like protein 4B (149 aa).

The protein belongs to the DIM1 family. As to quaternary structure, homodimer. Interacts with the U5-102 kDa protein subunit of the spliceosome.

The protein localises to the nucleus. Essential role in pre-mRNA splicing. Required in cell cycle progression for S/G(2) transition. This chain is Thioredoxin-like protein 4B (TXNL4B), found in Homo sapiens (Human).